Reading from the N-terminus, the 142-residue chain is uncharacterized protein (142 aa).

The helical transmembrane segment at 75-91 threads the bilayer; the sequence is YAAILAQVSFAFLCTGF.

The protein localises to the membrane. This is an uncharacterized protein from Haemophilus influenzae (strain ATCC 51907 / DSM 11121 / KW20 / Rd).